The sequence spans 219 residues: Translation initiation factor IF-3 (219 aa).

The protein belongs to the IF-3 family. Monomer.

It localises to the cytoplasm. Functionally, IF-3 binds to the 30S ribosomal subunit and shifts the equilibrium between 70S ribosomes and their 50S and 30S subunits in favor of the free subunits, thus enhancing the availability of 30S subunits on which protein synthesis initiation begins. The chain is Translation initiation factor IF-3 from Prochlorococcus marinus (strain MIT 9313).